Consider the following 211-residue polypeptide: MAEQHGAPEQAAASKSHGGLGGSYKVTVYELENFQGKRCELSAECPNLTESLLQKVGSIQVESGPWLAFERRAFRGEQFVLEKGDYPRWDAWSSSRRSDILLSLRPLHIDGPDHKLHLFENPAFSGRKMEIVDDDVPSLWAHGFQDRVASIRVINGTWVGYEFPGYRGRQYVFERGEFRHWNEWDANQPQLQSVRRIRDQKWHKRGCFLSS.

An N-acetylmethionine modification is found at Met-1. Ala-2 carries the N-acetylalanine; in Beta-crystallin B3, N-terminally processed modification. The interval 2 to 23 is N-terminal arm; that stretch reads AEQHGAPEQAAASKSHGGLGGS. 2 consecutive Beta/gamma crystallin 'Greek key' domains span residues 24 to 63 and 64 to 108; these read YKVTVYELENFQGKRCELSAECPNLTESLLQKVGSIQVES and GPWL…RPLH. Positions 109-113 are connecting peptide; that stretch reads IDGPD. 2 consecutive Beta/gamma crystallin 'Greek key' domains span residues 114 to 155 and 156 to 198; these read HKLH…RVIN and GTWV…RRIR. The segment at 200-211 is C-terminal arm; it reads QKWHKRGCFLSS.

This sequence belongs to the beta/gamma-crystallin family. In terms of assembly, homo/heterodimer, or complexes of higher-order. The structure of beta-crystallin oligomers seems to be stabilized through interactions between the N-terminal arms.

Crystallins are the dominant structural components of the vertebrate eye lens. The protein is Beta-crystallin B3 (Crybb3) of Rattus norvegicus (Rat).